Consider the following 76-residue polypeptide: Small ribosomal subunit protein bS18 (76 aa).

Belongs to the bacterial ribosomal protein bS18 family. In terms of assembly, part of the 30S ribosomal subunit. Forms a tight heterodimer with protein bS6.

In terms of biological role, binds as a heterodimer with protein bS6 to the central domain of the 16S rRNA, where it helps stabilize the platform of the 30S subunit. The protein is Small ribosomal subunit protein bS18 of Psychrobacter arcticus (strain DSM 17307 / VKM B-2377 / 273-4).